The sequence spans 660 residues: Phosphatidylinositol-3-phosphate phosphatase MTMR7 (660 aa).

Positions 126–504 (GWVLIDLSEE…FMYKFWSGMY (379 aa)) constitute a Myotubularin phosphatase domain. 3 residues coordinate a 1,2-diacyl-sn-glycero-3-phospho-(1D-myo-inositol-3-phosphate): Asn-250, Asn-275, and Ile-276. The active-site Phosphocysteine intermediate is the Cys-338. A 1,2-diacyl-sn-glycero-3-phospho-(1D-myo-inositol-3-phosphate)-binding residues include Ser-339, Asp-340, Gly-341, Trp-342, Asp-343, Arg-344, and Arg-384. The stretch at 521-551 (LMAVKEETQQLEEELEALEERLEKIQKVQLN) forms a coiled coil. Positions 554 to 660 (KVKSKQSEPS…DSDEAVFLTA (107 aa)) are disordered. Residues 566-596 (SGFSTSDNSIANTPQDYSGNMKSFPSRSPSQ) show a composition bias toward polar residues. Position 578 is a phosphothreonine (Thr-578). Positions 641 to 653 (APSEDSGKDRDSD) are enriched in basic and acidic residues.

The protein belongs to the protein-tyrosine phosphatase family. Non-receptor class myotubularin subfamily. As to quaternary structure, heterodimer (via C-terminus) with MTMR9 (via coiled coil domain); the interaction enhances MTMR7 catalytic activity. Does not homodimerize. Interacts with RAB1B (in GDP-bound form). In terms of tissue distribution, expressed specifically in brain.

The protein localises to the cytoplasm. Its subcellular location is the endomembrane system. It carries out the reaction a 1,2-diacyl-sn-glycero-3-phospho-(1D-myo-inositol-3-phosphate) + H2O = a 1,2-diacyl-sn-glycero-3-phospho-(1D-myo-inositol) + phosphate. It catalyses the reaction 1D-myo-inositol 1,3-bisphosphate + H2O = 1D-myo-inositol 1-phosphate + phosphate. Its activity is regulated as follows. Interaction with MTMR9 increases phosphatase activity. Its function is as follows. Lipid phosphatase that specifically dephosphorylates the D-3 position of phosphatidylinositol 3-phosphate (PtdIns(3)P) and inositol 1,3-bisphosphate (Ins(1,3)P2). This chain is Phosphatidylinositol-3-phosphate phosphatase MTMR7, found in Homo sapiens (Human).